A 228-amino-acid polypeptide reads, in one-letter code: Phosphoglycolate phosphatase 1 (228 aa).

D8 serves as the catalytic Nucleophile. 2 residues coordinate Mg(2+): D8 and D10. K149 lines the substrate pocket. Mg(2+) is bound by residues D172 and D176.

The protein belongs to the archaeal SPP-like hydrolase family. Mg(2+) serves as cofactor.

The enzyme catalyses 2-phosphoglycolate + H2O = glycolate + phosphate. In terms of biological role, catalyzes the dephosphorylation of 2-phosphoglycolate. The chain is Phosphoglycolate phosphatase 1 from Saccharolobus solfataricus (strain ATCC 35092 / DSM 1617 / JCM 11322 / P2) (Sulfolobus solfataricus).